The following is a 178-amino-acid chain: MHSSALLCCLVLLTGVRASPGQGTQSENSCTRFPGNLPHMLRDLRDVFSRVKTFFQMKDQLDNILLKESLLEDFKGYLGCQALSEMIQFYLEEVMPQAENHDPDIKEHVNSLGENLKTLRLRLRRCHRFLPCENKSKAVEQVKNAFSKLQEKGVYKAMSEFDIFINYIEAYMTMKIQN.

A signal peptide spans 1 to 18 (MHSSALLCCLVLLTGVRA). Cystine bridges form between C30-C126 and C80-C132. N-linked (GlcNAc...) asparagine glycosylation is present at N134.

The protein belongs to the IL-10 family. In terms of assembly, homodimer. Interacts with IL10RA and IL10RB.

The protein localises to the secreted. In terms of biological role, major immune regulatory cytokine that acts on many cells of the immune system where it has profound anti-inflammatory functions, limiting excessive tissue disruption caused by inflammation. Mechanistically, IL10 binds to its heterotetrameric receptor comprising IL10RA and IL10RB leading to JAK1 and STAT2-mediated phosphorylation of STAT3. In turn, STAT3 translocates to the nucleus where it drives expression of anti-inflammatory mediators. Targets antigen-presenting cells (APCs) such as macrophages and monocytes and inhibits their release of pro-inflammatory cytokines including granulocyte-macrophage colony-stimulating factor /GM-CSF, granulocyte colony-stimulating factor/G-CSF, IL-1 alpha, IL-1 beta, IL-6, IL-8 and TNF-alpha. Also interferes with antigen presentation by reducing the expression of MHC-class II and co-stimulatory molecules, thereby inhibiting their ability to induce T cell activation. In addition, controls the inflammatory response of macrophages by reprogramming essential metabolic pathways including mTOR signaling. This is Interleukin-10 (IL10) from Cercocebus atys (Sooty mangabey).